A 403-amino-acid chain; its full sequence is Phosphopentomutase (403 aa).

Mn(2+)-binding residues include Asp13, Asp298, His303, Asp339, His340, and His351.

Belongs to the phosphopentomutase family. Mn(2+) is required as a cofactor.

The protein resides in the cytoplasm. The enzyme catalyses 2-deoxy-alpha-D-ribose 1-phosphate = 2-deoxy-D-ribose 5-phosphate. It carries out the reaction alpha-D-ribose 1-phosphate = D-ribose 5-phosphate. The protein operates within carbohydrate degradation; 2-deoxy-D-ribose 1-phosphate degradation; D-glyceraldehyde 3-phosphate and acetaldehyde from 2-deoxy-alpha-D-ribose 1-phosphate: step 1/2. In terms of biological role, isomerase that catalyzes the conversion of deoxy-ribose 1-phosphate (dRib-1-P) and ribose 1-phosphate (Rib-1-P) to deoxy-ribose 5-phosphate (dRib-5-P) and ribose 5-phosphate (Rib-5-P), respectively. In Streptococcus pneumoniae (strain Hungary19A-6), this protein is Phosphopentomutase.